The chain runs to 107 residues: Iron-binding protein IscA (107 aa).

3 residues coordinate Fe cation: Cys35, Cys99, and Cys101.

This sequence belongs to the HesB/IscA family. As to quaternary structure, homodimer; may form tetramers and higher multimers. Fe cation is required as a cofactor.

Is able to transfer iron-sulfur clusters to apo-ferredoxin. Multiple cycles of [2Fe2S] cluster formation and transfer are observed, suggesting that IscA acts catalytically. Recruits intracellular free iron so as to provide iron for the assembly of transient iron-sulfur cluster in IscU in the presence of IscS, L-cysteine and the thioredoxin reductase system TrxA/TrxB. The chain is Iron-binding protein IscA from Enterobacter sp. (strain 638).